A 610-amino-acid chain; its full sequence is Calmegin (610 aa).

The first 19 residues, 1 to 19 (MHFQAFWLCLGLLFISINA), serve as a signal peptide directing secretion. At 20-471 (EFMDDDVETE…LMAAAEGHPW (452 aa)) the chain is on the lumenal side. The residue at position 128 (K128) is an N6-acetyllysine. Residues C151 and C185 are joined by a disulfide bond. Residues 258-338 (VPPIKPPKEI…KPDDWNEDTD (81 aa)) form a disordered region. Positions 263–284 (PPKEIEDPNDKKPEEWDERAKI) are enriched in basic and acidic residues. Repeat copies occupy residues 267–280 (IEDP…EWDE), 284–297 (IPDP…DWDE), 303–316 (IEDS…GWLD), 322–335 (IPDP…DWNE), 339–352 (GEWE…PACR), 356–369 (GEWK…PKYK), 370–383 (GVWR…PNYQ), and 384–397 (GIWS…PDYF). Basic and acidic residues predominate over residues 317-332 (DEPKFIPDPNAEKPDD). The segment at 317-350 (DEPKFIPDPNAEKPDDWNEDTDGEWEAPQILNPA) is interaction with PPIB. A disulfide bond links C351 and C355. The helical transmembrane segment at 472–492 (LWLIYLVTAGVPIALITSFCW) threads the bilayer. Topologically, residues 493–610 (PRKVKKKHKD…SVRKRRVRKD (118 aa)) are cytoplasmic. Residues 521–548 (QEEKEEKAALEKPMDLEEEKKQNDGEML) are compositionally biased toward basic and acidic residues. Residues 521-610 (QEEKEEKAAL…SVRKRRVRKD (90 aa)) form a disordered region. A compositionally biased stretch (acidic residues) spans 549–571 (EKEEESEPEEKSEEEIEIIEGQE). A phosphoserine mark is found at S560, S576, S579, S581, S591, S594, and S601. Residues 601-610 (SVRKRRVRKD) are compositionally biased toward basic residues.

It belongs to the calreticulin family. In terms of assembly, interacts with PPIB. Interacts with ADAM2. Interacts with PDILT. As to expression, detected in testis (at protein level). Detected in testis.

The protein resides in the endoplasmic reticulum membrane. In terms of biological role, functions during spermatogenesis as a chaperone for a range of client proteins that are important for sperm adhesion onto the egg zona pellucida and for subsequent penetration of the zona pellucida. Required for normal sperm migration from the uterus into the oviduct. Required for normal male fertility. Binds calcium ions. The sequence is that of Calmegin (CLGN) from Homo sapiens (Human).